We begin with the raw amino-acid sequence, 264 residues long: S-adenosylmethionine decarboxylase proenzyme (264 aa).

S112 acts as the Schiff-base intermediate with substrate; via pyruvic acid in catalysis. The residue at position 112 (S112) is a Pyruvic acid (Ser); by autocatalysis. The Proton acceptor; for processing activity role is filled by H117. The active-site Proton donor; for catalytic activity is the C140.

The protein belongs to the prokaryotic AdoMetDC family. Type 2 subfamily. Heterooctamer of four alpha and four beta chains arranged as a tetramer of alpha/beta heterodimers. Pyruvate is required as a cofactor. Is synthesized initially as an inactive proenzyme. Formation of the active enzyme involves a self-maturation process in which the active site pyruvoyl group is generated from an internal serine residue via an autocatalytic post-translational modification. Two non-identical subunits are generated from the proenzyme in this reaction, and the pyruvate is formed at the N-terminus of the alpha chain, which is derived from the carboxyl end of the proenzyme. The post-translation cleavage follows an unusual pathway, termed non-hydrolytic serinolysis, in which the side chain hydroxyl group of the serine supplies its oxygen atom to form the C-terminus of the beta chain, while the remainder of the serine residue undergoes an oxidative deamination to produce ammonia and the pyruvoyl group blocking the N-terminus of the alpha chain.

The catalysed reaction is S-adenosyl-L-methionine + H(+) = S-adenosyl 3-(methylsulfanyl)propylamine + CO2. Its pathway is amine and polyamine biosynthesis; S-adenosylmethioninamine biosynthesis; S-adenosylmethioninamine from S-adenosyl-L-methionine: step 1/1. In terms of biological role, catalyzes the decarboxylation of S-adenosylmethionine to S-adenosylmethioninamine (dcAdoMet), the propylamine donor required for the synthesis of the polyamines spermine and spermidine from the diamine putrescine. The polypeptide is S-adenosylmethionine decarboxylase proenzyme (Enterobacter sp. (strain 638)).